Consider the following 112-residue polypeptide: Nitrogen regulatory protein P-II (112 aa).

Y51 bears the O-UMP-tyrosine mark.

The protein belongs to the P(II) protein family. In terms of assembly, homotrimer.

In nitrogen-limiting conditions, when the ratio of Gln to 2-ketoglutarate decreases, P-II is uridylylated to P-II-UMP. P-II-UMP allows the deadenylation of glutamine synthetase (GS), thus activating the enzyme. Conversely, in nitrogen excess P-II is deuridylated and promotes the adenylation of GS. P-II indirectly controls the transcription of the GS gene (glnA). P-II prevents NR-II-catalyzed conversion of NR-I to NR-I-phosphate, the transcriptional activator of glnA. When P-II is uridylylated to P-II-UMP, these events are reversed. This Aquifex aeolicus (strain VF5) protein is Nitrogen regulatory protein P-II (glnB).